Consider the following 299-residue polypeptide: Oxygen-dependent coproporphyrinogen-III oxidase (299 aa).

Serine 92 is a binding site for substrate. A divalent metal cation is bound by residues histidine 96 and histidine 106. Residue histidine 106 is the Proton donor of the active site. 108–110 (NVR) contacts substrate. Histidine 145 and histidine 175 together coordinate a divalent metal cation. Residues 239–274 (YVEFNLVYDRGTLFGLQSGGRAESILMSLPPRVRWE) form an important for dimerization region. 257–259 (GGR) contacts substrate.

Belongs to the aerobic coproporphyrinogen-III oxidase family. As to quaternary structure, homodimer. Requires a divalent metal cation as cofactor.

The protein localises to the cytoplasm. The enzyme catalyses coproporphyrinogen III + O2 + 2 H(+) = protoporphyrinogen IX + 2 CO2 + 2 H2O. The protein operates within porphyrin-containing compound metabolism; protoporphyrin-IX biosynthesis; protoporphyrinogen-IX from coproporphyrinogen-III (O2 route): step 1/1. In terms of biological role, involved in the heme biosynthesis. Catalyzes the aerobic oxidative decarboxylation of propionate groups of rings A and B of coproporphyrinogen-III to yield the vinyl groups in protoporphyrinogen-IX. This Xanthomonas axonopodis pv. citri (strain 306) protein is Oxygen-dependent coproporphyrinogen-III oxidase.